The chain runs to 375 residues: Sperm microtubule associated protein 2 (375 aa).

A disordered region spans residues 1-78 (MGELGEHRAS…MAGEELPETS (78 aa)). Residues 59-75 (EPEEEIPPEEMAGEELP) show a composition bias toward acidic residues. THEG repeat units follow at residues 110-129 (AKGRKKRSRRLLELAKPKTN), 176-195 (TITVPVVSQRMEELSRPKRF), 214-233 (STLEYQASNRLKQLATPKVR), 250-269 (AAQMAVPTPRTLRLAKPRPP), 282-301 (PKPYVSDYNRLLQLATPKAL), 318-337 (VTKNAVASSRIISLAQPKIR), and 352-371 (ASLVAQASPRIYELATPKYI). Ser-287 carries the phosphoserine modification.

In terms of assembly, interacts with CCT5. As to expression, testis specific (at protein level). Specifically expressed in spermatids; Sertoli cells maintain the level of expression in spermatids. If isolated spermatids are cultivated for 16 hours alone, the expression of THEG is down-regulated. May require signals from Sertoli cells to initiate changes in its gene expression through spermatogenesis.

The protein localises to the nucleus. In terms of biological role, may be involved (but not essential) in spermatogenesis. This is Sperm microtubule associated protein 2 from Mus musculus (Mouse).